The following is a 210-amino-acid chain: Ribonuclease HII (210 aa).

The region spanning 2–203 (SGVMGIDEAG…YKRVESEVKQ (202 aa)) is the RNase H type-2 domain. 3 residues coordinate a divalent metal cation: aspartate 8, glutamate 9, and aspartate 99.

It belongs to the RNase HII family. Mn(2+) serves as cofactor. The cofactor is Mg(2+).

The protein resides in the cytoplasm. The enzyme catalyses Endonucleolytic cleavage to 5'-phosphomonoester.. Functionally, endonuclease that specifically degrades the RNA of RNA-DNA hybrids. The protein is Ribonuclease HII of Methanopyrus kandleri (strain AV19 / DSM 6324 / JCM 9639 / NBRC 100938).